The following is a 61-amino-acid chain: Large ribosomal subunit protein bL32 (61 aa).

Residues 1–16 are compositionally biased toward basic residues; the sequence is MAVPKRKTSPSRRGMR. The disordered stretch occupies residues 1 to 44; the sequence is MAVPKRKTSPSRRGMRRSADALKAPTYVEDKDSGELRRPHHIDL. Over residues 28-44 the composition is skewed to basic and acidic residues; sequence VEDKDSGELRRPHHIDL.

It belongs to the bacterial ribosomal protein bL32 family.

The polypeptide is Large ribosomal subunit protein bL32 (Methylobacterium nodulans (strain LMG 21967 / CNCM I-2342 / ORS 2060)).